The following is a 188-amino-acid chain: Crossover junction endodeoxyribonuclease RuvC (188 aa).

Residues Asp-7, Glu-68, and Asp-141 contribute to the active site. Mg(2+) contacts are provided by Asp-7, Glu-68, and Asp-141.

The protein belongs to the RuvC family. As to quaternary structure, homodimer which binds Holliday junction (HJ) DNA. The HJ becomes 2-fold symmetrical on binding to RuvC with unstacked arms; it has a different conformation from HJ DNA in complex with RuvA. In the full resolvosome a probable DNA-RuvA(4)-RuvB(12)-RuvC(2) complex forms which resolves the HJ. Mg(2+) serves as cofactor.

Its subcellular location is the cytoplasm. It carries out the reaction Endonucleolytic cleavage at a junction such as a reciprocal single-stranded crossover between two homologous DNA duplexes (Holliday junction).. In terms of biological role, the RuvA-RuvB-RuvC complex processes Holliday junction (HJ) DNA during genetic recombination and DNA repair. Endonuclease that resolves HJ intermediates. Cleaves cruciform DNA by making single-stranded nicks across the HJ at symmetrical positions within the homologous arms, yielding a 5'-phosphate and a 3'-hydroxyl group; requires a central core of homology in the junction. The consensus cleavage sequence is 5'-(A/T)TT(C/G)-3'. Cleavage occurs on the 3'-side of the TT dinucleotide at the point of strand exchange. HJ branch migration catalyzed by RuvA-RuvB allows RuvC to scan DNA until it finds its consensus sequence, where it cleaves and resolves the cruciform DNA. In Mycobacterium tuberculosis (strain ATCC 25177 / H37Ra), this protein is Crossover junction endodeoxyribonuclease RuvC.